Consider the following 260-residue polypeptide: UPF0246 protein Mmwyl1_3597 (260 aa).

The protein belongs to the UPF0246 family.

In Marinomonas sp. (strain MWYL1), this protein is UPF0246 protein Mmwyl1_3597.